The sequence spans 785 residues: Endonuclease MutS2 (785 aa).

335–342 (GPNTGGKT) serves as a coordination point for ATP. One can recognise a Smr domain in the interval 710-785 (LDLRGERYED…GNGVTIVEFK (76 aa)).

The protein belongs to the DNA mismatch repair MutS family. MutS2 subfamily. Homodimer. Binds to stalled ribosomes, contacting rRNA.

In terms of biological role, endonuclease that is involved in the suppression of homologous recombination and thus may have a key role in the control of bacterial genetic diversity. Acts as a ribosome collision sensor, splitting the ribosome into its 2 subunits. Detects stalled/collided 70S ribosomes which it binds and splits by an ATP-hydrolysis driven conformational change. Acts upstream of the ribosome quality control system (RQC), a ribosome-associated complex that mediates the extraction of incompletely synthesized nascent chains from stalled ribosomes and their subsequent degradation. Probably generates substrates for RQC. The protein is Endonuclease MutS2 of Listeria welshimeri serovar 6b (strain ATCC 35897 / DSM 20650 / CCUG 15529 / CIP 8149 / NCTC 11857 / SLCC 5334 / V8).